Consider the following 1378-residue polypeptide: DNA-directed RNA polymerase subunit beta (1378 aa).

The protein belongs to the RNA polymerase beta chain family. In terms of assembly, the RNAP catalytic core consists of 2 alpha, 1 beta, 1 beta' and 1 omega subunit. When a sigma factor is associated with the core the holoenzyme is formed, which can initiate transcription.

It carries out the reaction RNA(n) + a ribonucleoside 5'-triphosphate = RNA(n+1) + diphosphate. DNA-dependent RNA polymerase catalyzes the transcription of DNA into RNA using the four ribonucleoside triphosphates as substrates. This is DNA-directed RNA polymerase subunit beta from Sorangium cellulosum (strain So ce56) (Polyangium cellulosum (strain So ce56)).